The chain runs to 156 residues: uncharacterized protein (156 aa).

This is an uncharacterized protein from Saccharolobus islandicus (Sulfolobus islandicus).